The sequence spans 202 residues: Translation initiation factor 2 subunit beta (202 aa).

The TRAM domain maps to 145-202; that stretch reads AIEEGGTYELRIDAVGSKGDGIAKIDKYTVFVPGATKGDVVKVKIKKISGNLAFSERA.

This sequence belongs to the eIF-2-beta/eIF-5 family. As to quaternary structure, heterotrimer composed of an alpha, a beta and a gamma chain.

Functionally, eIF-2 functions in the early steps of protein synthesis by forming a ternary complex with GTP and initiator tRNA. The sequence is that of Translation initiation factor 2 subunit beta (eif2b) from Methanosarcina mazei (strain ATCC BAA-159 / DSM 3647 / Goe1 / Go1 / JCM 11833 / OCM 88) (Methanosarcina frisia).